We begin with the raw amino-acid sequence, 641 residues long: MRSTSTFTRTPAFLLHTLARWLLVWGVLGSSVVAEKKCASNYYVRSLPGQPDGPLLKMHAGHVEVDHKNNGNLFFWHFQNRHIANRQRTVIWLNGGPGCSSMDGALMEIGPYRLKDDHTLIYNEGSWDEFANILFVDQPVGTGFSYVNTNSYIHELDEMASHFVTFLEKWFELFPEYEHDDLYFAGESYAGQYIPYIAKAILDRNKNTTTQAQSRLWNLKGLLIGNGWISPVEQYQAYLTYAYKENLIQSGTDAAKRVERAHSECISELDSGGKDRIHAGACEKVLSAVLEVTRENGKCINMYDIRLRDEFPSCGMNWPPDLKHITPYLRRDDVISALHVNDDKRTGWRECTGAVSSNFNARNSKPSVQLLPEILESGIPITLFSGAKDFICNHIGTEQFIHNMQWSGGAGFELSPGVWAPRHDWTFEGEAAGYYQEARNLTYVLFYNASHMVPFDFGRRSRDMLDRFLGVDITSIGGNPADSRIDGEKGALTSVGNHPNSTTAEQREKEKLKAATWAAYYKSGEVALVVVAIAAAVWGFFIWRSRRQRQGSGYRGIYPNLNGLSSGSFSGFRNKRSSHDDIEAAADFDASELDTLRGTDDRSRGANGHGSVGGDSEDEDEKFGAQKESYHPSNMPSSSSS.

An N-terminal signal peptide occupies residues 1–34; it reads MRSTSTFTRTPAFLLHTLARWLLVWGVLGSSVVA. The Lumenal portion of the chain corresponds to 35-522; it reads EKKCASNYYV…KAATWAAYYK (488 aa). Ser-188 is a catalytic residue. An N-linked (GlcNAc...) asparagine glycan is attached at Asn-207. Asp-389 is an active-site residue. N-linked (GlcNAc...) asparagine glycans are attached at residues Asn-440 and Asn-448. The active site involves His-451. Residues 487 to 506 form a disordered region; sequence GEKGALTSVGNHPNSTTAEQ. Residues 494-504 are compositionally biased toward polar residues; the sequence is SVGNHPNSTTA. N-linked (GlcNAc...) asparagine glycosylation is present at Asn-500. Residues 523-543 traverse the membrane as a helical segment; sequence SGEVALVVVAIAAAVWGFFIW. Residues 544–641 are Cytoplasmic-facing; that stretch reads RSRRQRQGSG…PSNMPSSSSS (98 aa). The interval 593-641 is disordered; it reads LDTLRGTDDRSRGANGHGSVGGDSEDEDEKFGAQKESYHPSNMPSSSSS. Over residues 594–604 the composition is skewed to basic and acidic residues; the sequence is DTLRGTDDRSR. A compositionally biased stretch (polar residues) spans 631-641; it reads HPSNMPSSSSS.

The protein belongs to the peptidase S10 family.

It localises to the golgi apparatus. Its subcellular location is the trans-Golgi network membrane. It carries out the reaction Preferential release of a C-terminal arginine or lysine residue.. Functionally, protease with a carboxypeptidase B-like function involved in the C-terminal processing of the lysine and arginine residues from protein precursors. Promotes cell fusion and is involved in the programmed cell death. This is Pheromone-processing carboxypeptidase KEX1 (KEX1) from Coccidioides posadasii (strain RMSCC 757 / Silveira) (Valley fever fungus).